Here is a 1149-residue protein sequence, read N- to C-terminus: ATP-dependent helicase/deoxyribonuclease subunit B (1149 aa).

8 to 15 (GRAGSGKS) contributes to the ATP binding site. [4Fe-4S] cluster contacts are provided by cysteine 788, cysteine 1106, cysteine 1109, and cysteine 1115.

This sequence belongs to the helicase family. AddB/RexB type 1 subfamily. As to quaternary structure, heterodimer of AddA and AddB. The cofactor is Mg(2+). Requires [4Fe-4S] cluster as cofactor.

The heterodimer acts as both an ATP-dependent DNA helicase and an ATP-dependent, dual-direction single-stranded exonuclease. Recognizes the chi site generating a DNA molecule suitable for the initiation of homologous recombination. The AddB subunit has 5' -&gt; 3' nuclease activity but not helicase activity. This is ATP-dependent helicase/deoxyribonuclease subunit B from Ruminiclostridium cellulolyticum (strain ATCC 35319 / DSM 5812 / JCM 6584 / H10) (Clostridium cellulolyticum).